The sequence spans 140 residues: Large ribosomal subunit protein uL24 (140 aa).

The protein belongs to the universal ribosomal protein uL24 family. Part of the 50S ribosomal subunit.

Its function is as follows. One of two assembly initiator proteins, it binds directly to the 5'-end of the 23S rRNA, where it nucleates assembly of the 50S subunit. Located at the polypeptide exit tunnel on the outside of the subunit. This is Large ribosomal subunit protein uL24 from Nanoarchaeum equitans (strain Kin4-M).